We begin with the raw amino-acid sequence, 43 residues long: Protein PsbN (43 aa).

A helical transmembrane segment spans residues 7–29; that stretch reads LSIALAAVCIGVTGYSIYLSFGP.

It belongs to the PsbN family.

It is found in the cellular thylakoid membrane. May play a role in photosystem I and II biogenesis. The protein is Protein PsbN of Thermosynechococcus vestitus (strain NIES-2133 / IAM M-273 / BP-1).